Reading from the N-terminus, the 2312-residue chain is Protein Ycf2 (2312 aa).

Disordered regions lie at residues 170–191 (SSQLKGSSDQSRDHFDSIGTED), 223–253 (TEIESDRFSKGLSGSSSKSRLFTEGEKEMNN), and 942–1009 (KRKK…KRKE). Residues 232–242 (KGLSGSSSKSR) show a composition bias toward low complexity. 2 stretches are compositionally biased toward basic and acidic residues: residues 243-252 (LFTEGEKEMN) and 950-1007 (KRKE…PEKR). ATP is bound at residue 1439–1446 (GSIGSGRS). 3 disordered regions span residues 1513–1532 (YEDRDSDDYEPGASDDYEPG), 1857–1983 (LVGS…LLRP), and 2050–2166 (PAEE…DGFS). Residues 1863-1963 (TEEEVEGTEE…GEGTEDEEVE (101 aa)) are compositionally biased toward acidic residues. Over residues 1964-1976 (GTEKDSSQFDNDR) the composition is skewed to basic and acidic residues. Composition is skewed to acidic residues over residues 2050–2067 (PAEEIPEEEDPLPEEALE) and 2074–2149 (GEEE…ENDS).

It belongs to the Ycf2 family.

The protein localises to the plastid. The protein resides in the chloroplast stroma. Probable ATPase of unknown function. Its presence in a non-photosynthetic plant (Epifagus virginiana) and experiments in tobacco indicate that it has an essential function which is probably not related to photosynthesis. This is Protein Ycf2 from Oenothera parviflora (Small-flowered evening primrose).